The sequence spans 250 residues: Glutathione transferase omega-1 (250 aa).

The GST N-terminal domain maps to Ser-21–Arg-101. The active-site Nucleophile is Cys-33. Residues Lys-60 and Glu-85 to Ser-86 each bind glutathione. The 129-residue stretch at Asp-106–Phe-234 folds into the GST C-terminal domain.

This sequence belongs to the GST superfamily. Omega family. In terms of assembly, homodimer. Expressed in the intestinal cells.

The protein resides in the cytoplasm. The catalysed reaction is RX + glutathione = an S-substituted glutathione + a halide anion + H(+). The enzyme catalyses L-dehydroascorbate + 2 glutathione = glutathione disulfide + L-ascorbate. It carries out the reaction methylarsonate + 2 glutathione + H(+) = methylarsonous acid + glutathione disulfide + H2O. In terms of biological role, exhibits glutathione-dependent thiol transferase activity. Has dehydroascorbate reductase activity and may contribute to the recycling of ascorbic acid. Participates in the biotransformation of inorganic arsenic and reduces monomethylarsonic acid (MMA). Protects against environmental stress and oxidative stress. In Caenorhabditis elegans, this protein is Glutathione transferase omega-1 (gsto-1).